We begin with the raw amino-acid sequence, 338 residues long: Phenylalanine--tRNA ligase alpha subunit (338 aa).

E252 is a binding site for Mg(2+).

The protein belongs to the class-II aminoacyl-tRNA synthetase family. Phe-tRNA synthetase alpha subunit type 1 subfamily. As to quaternary structure, tetramer of two alpha and two beta subunits. Requires Mg(2+) as cofactor.

It localises to the cytoplasm. The catalysed reaction is tRNA(Phe) + L-phenylalanine + ATP = L-phenylalanyl-tRNA(Phe) + AMP + diphosphate + H(+). The polypeptide is Phenylalanine--tRNA ligase alpha subunit (Pseudomonas aeruginosa (strain UCBPP-PA14)).